The sequence spans 601 residues: Uptake hydrogenase large subunit (601 aa).

Positions 74, 77, 580, and 583 each coordinate Ni(2+).

Belongs to the [NiFe]/[NiFeSe] hydrogenase large subunit family. Heterodimer of a large and a small subunit. The cofactor is Ni(2+).

The protein localises to the cell membrane. It catalyses the reaction H2 + A = AH2. Its function is as follows. This enzyme recycles the H(2) produced by nitrogenase to increase the production of ATP and to protect nitrogenase against inhibition or damage by O(2) under carbon- or phosphate-limited conditions. In Azotobacter chroococcum mcd 1, this protein is Uptake hydrogenase large subunit (hupL).